The primary structure comprises 87 residues: Large ribosomal subunit protein eL20 (87 aa).

It belongs to the eukaryotic ribosomal protein eL20 family. As to quaternary structure, part of the 50S ribosomal subunit. Binds 23S rRNA.

The sequence is that of Large ribosomal subunit protein eL20 from Staphylothermus marinus (strain ATCC 43588 / DSM 3639 / JCM 9404 / F1).